Consider the following 239-residue polypeptide: Large ribosomal subunit protein uL3 (239 aa).

Disordered regions lie at residues 140–166 and 211–239; these read SHRSIGSTGGRQDPGKTWKNKKMPGHM and PLPKEAPKPGKFKVAGEQAAEAPAVQEGA. At Gln151 the chain carries N5-methylglutamine.

The protein belongs to the universal ribosomal protein uL3 family. As to quaternary structure, part of the 50S ribosomal subunit. Forms a cluster with proteins L14 and L19. Methylated by PrmB.

In terms of biological role, one of the primary rRNA binding proteins, it binds directly near the 3'-end of the 23S rRNA, where it nucleates assembly of the 50S subunit. This is Large ribosomal subunit protein uL3 from Bradyrhizobium sp. (strain BTAi1 / ATCC BAA-1182).